A 430-amino-acid polypeptide reads, in one-letter code: Chromatin assembly factor 1 p55 subunit (430 aa).

Phosphoserine is present on residues serine 11 and serine 100. WD repeat units follow at residues 126–159 (NHEGEVNRARYMPQNACVIATKTPSSDVLVFDYT), 179–210 (GHQKEGYGLSWNPNLNGYLLSASDDHTICLWD), 229–260 (GHTAVVEDVAWHLLHESLFGSVADDQKLMIWD), 275–306 (AHTAEVNCLSFNPYSEFILATGSADKTVALWD), 319–350 (SHKDEIFQVQWSPHNETILASSGTDRRLHVWD), and 376–407 (GHTAKISDFSWNPNEPWIICSVSEDNIMQVWQ).

The protein belongs to the WD repeat RBAP46/RBAP48/MSI1 family. Probably binds directly to helix 1 of the histone fold of histone H4, a region that is not accessible when H4 is in chromatin. Self associates. Associates with chromatin. Component of the CAF-1 complex, composed of Caf1-55, Caf1-105 and Caf1-180; within the CAF-1 complex, Caf1-180 interacts directly with both Caf1-55 and Caf1-105. Component of the NuRD complex, composed of at least Caf1-55, Mi-2, MTA1-like and HDAC1/Rpd3. Within the NuRD complex, Caf1-55 may interact directly with Mi-2, MTA1-like and HDAC1/Rpd3. The NuRD complex may also associate with the methyl-DNA binding protein MBD-like via Caf1-55 and Mi-2. Component of the NURF complex, composed of Caf1-55, E(bx), Nurf-38 and Iswi. Component of the polycomb repressive complex 2 (PRC2, also known as the Esc/E(Z) complex), composed of Caf1-55, esc, E(z), Su(z)12, and possibly pho. PRC2 associates with the accessory components Jarid2 and jing to form the PRC2 Jarid2-jing variant (PRC2.2). PRC2 may also associate with Pcl and HDAC1/Rpd3 during early embryogenesis. Interacts with Rbf and Rbf2. Component of the DREAM complex at least composed of Myb, Caf1-55, mip40, mip120, mip130, E2f2, Dp, Rbf, Rbf2, lin-52, HDAC1/Rpd3 and l(3)mbt.

The protein localises to the nucleus. In terms of biological role, core histone-binding subunit that may target chromatin assembly factors, chromatin remodeling factors and histone deacetylases to their histone substrates in a manner that is regulated by nucleosomal DNA. Component of several complexes which regulate chromatin metabolism. These include the chromatin assembly factor 1 (CAF-1) complex, which is required for chromatin assembly following DNA replication and DNA repair; the nucleosome remodeling and deacetylase complex (the NuRD complex), which promotes transcriptional repression by histone deacetylation and nucleosome remodeling; the nucleosome remodeling factor (NURF) complex, which catalyzes ATP-dependent nucleosome sliding and facilitates transcription of chromatin; and the polycomb group (PcG) repressor complex ESC-E(Z), which promotes repression of homeotic genes during development. Also required for transcriptional repression of E2F target genes by E2f2 and Rbf or Rbf2. This is Chromatin assembly factor 1 p55 subunit from Drosophila melanogaster (Fruit fly).